Consider the following 323-residue polypeptide: tRNA U34 carboxymethyltransferase (323 aa).

Carboxy-S-adenosyl-L-methionine contacts are provided by residues lysine 91, tryptophan 105, lysine 110, glycine 130, 181 to 182 (IE), methionine 196, tyrosine 200, and arginine 315.

Belongs to the class I-like SAM-binding methyltransferase superfamily. CmoB family. As to quaternary structure, homotetramer.

The catalysed reaction is carboxy-S-adenosyl-L-methionine + 5-hydroxyuridine(34) in tRNA = 5-carboxymethoxyuridine(34) in tRNA + S-adenosyl-L-homocysteine + H(+). Catalyzes carboxymethyl transfer from carboxy-S-adenosyl-L-methionine (Cx-SAM) to 5-hydroxyuridine (ho5U) to form 5-carboxymethoxyuridine (cmo5U) at position 34 in tRNAs. The chain is tRNA U34 carboxymethyltransferase from Enterobacter sp. (strain 638).